The following is a 379-amino-acid chain: Carboxypeptidase Y-deficient protein 8 (379 aa).

Low complexity predominate over residues 84 to 107 (HGSGNSSSKKVTSSTSSSSSNGSV). Positions 84-108 (HGSGNSSSKKVTSSTSSSSSNGSVD) are disordered. Ser216 is modified (phosphoserine).

The protein belongs to the VPS26 family. Component of the retromer complex which consists of VPS29, VPS26, VPS35, VPS5 and VPS17. Component of a retromer subcomplex consisting of VPS29, VPS26 and VPS35.

Plays a role in vesicular protein sorting. Required for the endosome-to-Golgi retrieval of the vacuolar protein sorting receptor VPS10. Component of the membrane-associated retromer complex which is essential in endosome-to-Golgi retrograde transport. The VPS29-VPS26-VPS35 subcomplex may be involved in cargo selection. The polypeptide is Carboxypeptidase Y-deficient protein 8 (PEP8) (Saccharomyces cerevisiae (strain ATCC 204508 / S288c) (Baker's yeast)).